The following is a 357-amino-acid chain: Phosphoribosylformylglycinamidine cyclo-ligase (357 aa).

It belongs to the AIR synthase family.

It localises to the cytoplasm. It catalyses the reaction 2-formamido-N(1)-(5-O-phospho-beta-D-ribosyl)acetamidine + ATP = 5-amino-1-(5-phospho-beta-D-ribosyl)imidazole + ADP + phosphate + H(+). It functions in the pathway purine metabolism; IMP biosynthesis via de novo pathway; 5-amino-1-(5-phospho-D-ribosyl)imidazole from N(2)-formyl-N(1)-(5-phospho-D-ribosyl)glycinamide: step 2/2. The chain is Phosphoribosylformylglycinamidine cyclo-ligase from Rhizobium leguminosarum.